Consider the following 860-residue polypeptide: Alpha,alpha-trehalose-phosphate synthase [UDP-forming] 6 (860 aa).

At Ser-5 the chain carries Phosphoserine. The glycosyltransferase stretch occupies residues 53-557 (DRIIIVANEL…ARSFLQDLER (505 aa)).

This sequence in the N-terminal section; belongs to the glycosyltransferase 20 family. In the C-terminal section; belongs to the trehalose phosphatase family. Binds to the phosphopeptide-binding site of GRF/14-3-3. In terms of processing, phosphorylated. As to expression, expressed in seedlings, leaves, stems, flowers, siliques and roots.

The catalysed reaction is D-glucose 6-phosphate + UDP-alpha-D-glucose = alpha,alpha-trehalose 6-phosphate + UDP + H(+). Functionally, regulates plant architecture, shape of epidermal pavement cells and branching of trichomes. This Arabidopsis thaliana (Mouse-ear cress) protein is Alpha,alpha-trehalose-phosphate synthase [UDP-forming] 6.